A 280-amino-acid polypeptide reads, in one-letter code: Large ribosomal subunit protein uL2 (280 aa).

Disordered stretches follow at residues 32-54 (SLLVPNKSTGGRNNNGRVTSRHM) and 221-280 (RGMA…DSKK). Polar residues predominate over residues 37-49 (NKSTGGRNNNGRV). The span at 232–242 (MGGGEGKSKSG) shows a compositional bias: gly residues. The span at 257–280 (KGLKTRKRKKASSKLIVRRRDSKK) shows a compositional bias: basic residues.

The protein belongs to the universal ribosomal protein uL2 family. Part of the 50S ribosomal subunit. Forms a bridge to the 30S subunit in the 70S ribosome.

One of the primary rRNA binding proteins. Required for association of the 30S and 50S subunits to form the 70S ribosome, for tRNA binding and peptide bond formation. It has been suggested to have peptidyltransferase activity; this is somewhat controversial. Makes several contacts with the 16S rRNA in the 70S ribosome. This is Large ribosomal subunit protein uL2 from Chloroherpeton thalassium (strain ATCC 35110 / GB-78).